A 214-amino-acid chain; its full sequence is Ribosomal RNA small subunit methyltransferase G (214 aa).

Residues glycine 72, phenylalanine 77, 125-126 (VE), and arginine 141 contribute to the S-adenosyl-L-methionine site.

The protein belongs to the methyltransferase superfamily. RNA methyltransferase RsmG family.

Its subcellular location is the cytoplasm. The enzyme catalyses guanosine(527) in 16S rRNA + S-adenosyl-L-methionine = N(7)-methylguanosine(527) in 16S rRNA + S-adenosyl-L-homocysteine. Functionally, specifically methylates the N7 position of guanine in position 527 of 16S rRNA. This is Ribosomal RNA small subunit methyltransferase G from Sinorhizobium fredii (strain NBRC 101917 / NGR234).